Reading from the N-terminus, the 120-residue chain is Small ribosomal subunit protein uS13 (120 aa).

Residues 94–120 (GLPLRGQRTRTNARTRKGPRKAIAGKK) are disordered.

The protein belongs to the universal ribosomal protein uS13 family. In terms of assembly, part of the 30S ribosomal subunit. Forms a loose heterodimer with protein S19. Forms two bridges to the 50S subunit in the 70S ribosome.

In terms of biological role, located at the top of the head of the 30S subunit, it contacts several helices of the 16S rRNA. In the 70S ribosome it contacts the 23S rRNA (bridge B1a) and protein L5 of the 50S subunit (bridge B1b), connecting the 2 subunits; these bridges are implicated in subunit movement. Contacts the tRNAs in the A and P-sites. In Aromatoleum aromaticum (strain DSM 19018 / LMG 30748 / EbN1) (Azoarcus sp. (strain EbN1)), this protein is Small ribosomal subunit protein uS13.